A 221-amino-acid polypeptide reads, in one-letter code: Ribosomal RNA small subunit methyltransferase Nep1 (221 aa).

S-adenosyl-L-methionine is bound by residues Gly-174, Gly-179, and Val-196–Leu-201.

The protein belongs to the class IV-like SAM-binding methyltransferase superfamily. RNA methyltransferase NEP1 family. Homodimer.

The enzyme catalyses a pseudouridine in rRNA + S-adenosyl-L-methionine = an N(1)-methylpseudouridine in rRNA + S-adenosyl-L-homocysteine + H(+). Functionally, methyltransferase involved in ribosomal biogenesis. Specifically catalyzes the N1-methylation of the pseudouridine corresponding to position 914 in M.jannaschii 16S rRNA. The chain is Ribosomal RNA small subunit methyltransferase Nep1 from Pyrobaculum neutrophilum (strain DSM 2338 / JCM 9278 / NBRC 100436 / V24Sta) (Thermoproteus neutrophilus).